A 114-amino-acid chain; its full sequence is Large ribosomal subunit protein uL22 (114 aa).

Belongs to the universal ribosomal protein uL22 family. Part of the 50S ribosomal subunit.

This protein binds specifically to 23S rRNA; its binding is stimulated by other ribosomal proteins, e.g. L4, L17, and L20. It is important during the early stages of 50S assembly. It makes multiple contacts with different domains of the 23S rRNA in the assembled 50S subunit and ribosome. Functionally, the globular domain of the protein is located near the polypeptide exit tunnel on the outside of the subunit, while an extended beta-hairpin is found that lines the wall of the exit tunnel in the center of the 70S ribosome. The polypeptide is Large ribosomal subunit protein uL22 (Aeromonas salmonicida (strain A449)).